A 673-amino-acid chain; its full sequence is UvrABC system protein B (673 aa).

The region spanning 28-414 is the Helicase ATP-binding domain; that stretch reads ASILQNKRSQ…EAGGEIVEQL (387 aa). ATP is bound at residue 41-48; sequence GITGSGKT. Residues 94 to 117 carry the Beta-hairpin motif; sequence YYDYYQPEAYVPRTDTYIEKDMSI. In terms of domain architecture, Helicase C-terminal spans 433–595; that stretch reads QVDDCLAEIR…ITPRTVKREI (163 aa). A UVR domain is found at 633–668; the sequence is RLKIKECEKEMKKAAKEFRFEEAADWRDQMRRYQQI.

Belongs to the UvrB family. As to quaternary structure, forms a heterotetramer with UvrA during the search for lesions. Interacts with UvrC in an incision complex.

Its subcellular location is the cytoplasm. In terms of biological role, the UvrABC repair system catalyzes the recognition and processing of DNA lesions. A damage recognition complex composed of 2 UvrA and 2 UvrB subunits scans DNA for abnormalities. Upon binding of the UvrA(2)B(2) complex to a putative damaged site, the DNA wraps around one UvrB monomer. DNA wrap is dependent on ATP binding by UvrB and probably causes local melting of the DNA helix, facilitating insertion of UvrB beta-hairpin between the DNA strands. Then UvrB probes one DNA strand for the presence of a lesion. If a lesion is found the UvrA subunits dissociate and the UvrB-DNA preincision complex is formed. This complex is subsequently bound by UvrC and the second UvrB is released. If no lesion is found, the DNA wraps around the other UvrB subunit that will check the other stand for damage. The sequence is that of UvrABC system protein B from Protochlamydia amoebophila (strain UWE25).